The sequence spans 288 residues: MAGAKEIRSKISSINKTRKITRAMEMVAASKMRKTQERMRASKPYANKIYEVIKHIARAASEYRHPFMSEREIKRIGIIVVTTDRGLCGGLNSNLFRETIRTIRNWQEHGKEVDIAVIGRKGQAFFRRVGGNILGSIDHLGDTPSINDFIGVVKIMLDAYYNGAIDSLHIVYNEFINTMTQKPFVKQLLPLPKSEEDKKTLGHHWDYIYEPEAKELLDEILERYIELQVYQAVVENIACEQAAKMIAMKSATDNAGDLIKEFQLAYNKARQAAITQELAEIVGGAAAL.

This sequence belongs to the ATPase gamma chain family. As to quaternary structure, F-type ATPases have 2 components, CF(1) - the catalytic core - and CF(0) - the membrane proton channel. CF(1) has five subunits: alpha(3), beta(3), gamma(1), delta(1), epsilon(1). CF(0) has three main subunits: a, b and c.

The protein localises to the cell inner membrane. Produces ATP from ADP in the presence of a proton gradient across the membrane. The gamma chain is believed to be important in regulating ATPase activity and the flow of protons through the CF(0) complex. This chain is ATP synthase gamma chain, found in Legionella pneumophila (strain Paris).